A 146-amino-acid chain; its full sequence is Large-conductance mechanosensitive channel (146 aa).

Helical transmembrane passes span 21-41 (VGIIIGAAFTGIVSSLVADLI), 44-64 (IIGLITGGIDFSNLFVNLGDG), and 83-103 (GSFITAVINFLIIAWVVFLLV).

It belongs to the MscL family. As to quaternary structure, homopentamer.

The protein resides in the cell inner membrane. Functionally, channel that opens in response to stretch forces in the membrane lipid bilayer. May participate in the regulation of osmotic pressure changes within the cell. This Cereibacter sphaeroides (strain ATCC 17029 / ATH 2.4.9) (Rhodobacter sphaeroides) protein is Large-conductance mechanosensitive channel.